The primary structure comprises 434 residues: Cysteine--tRNA ligase (434 aa).

Position 28 (Cys28) interacts with Zn(2+). Positions 30–40 (PTVYDDIHIGN) match the 'HIGH' region motif. The Zn(2+) site is built by Cys207, His232, and Glu236. The 'KMSKS' region motif lies at 264–268 (KMSKS). Lys267 is a binding site for ATP.

The protein belongs to the class-I aminoacyl-tRNA synthetase family. In terms of assembly, monomer. Zn(2+) is required as a cofactor.

It is found in the cytoplasm. It carries out the reaction tRNA(Cys) + L-cysteine + ATP = L-cysteinyl-tRNA(Cys) + AMP + diphosphate. This is Cysteine--tRNA ligase from Acholeplasma laidlawii (strain PG-8A).